Consider the following 784-residue polypeptide: Homeobox-leucine zipper protein ROC2 (784 aa).

Residues 60–113 (AESGDNMIRSRASDPLGGDEFESKSGSENVDGVSVDDQDPNQRPRKKRYHRHTQ) are disordered. Residues 102–113 (RPRKKRYHRHTQ) show a composition bias toward basic residues. A DNA-binding region (homeobox) is located at residues 104–163 (RKKRYHRHTQHQIQEMEAFFKECPHPDDKQRKELSRELGLEPLQVKFWFQNKRTQMKNQH). A coiled-coil region spans residues 158–234 (QMKNQHERHE…DRISAIAAKY (77 aa)). The region spanning 286–523 (SEVDKPMIVE…LDRQCERLAS (238 aa)) is the START domain.

Belongs to the HD-ZIP homeobox family. Class IV subfamily.

The protein localises to the nucleus. Functionally, probable transcription factor. In Oryza sativa subsp. japonica (Rice), this protein is Homeobox-leucine zipper protein ROC2 (ROC2).